The following is a 345-amino-acid chain: Guanine nucleotide-binding protein alpha-4 subunit (345 aa).

Positions 30-345 constitute a G-alpha domain; sequence KDVKLLLLGP…TILSQALEHF (316 aa). The interval 33 to 46 is G1 motif; it reads KLLLLGPGESGKST. GTP-binding positions include 38-45, 171-177, 196-200, 265-268, and alanine 320; these read GPGESGKS, LRCRVRT, DVGGQ, and NKKD. 2 residues coordinate Mg(2+): serine 45 and threonine 177. Residues 169–177 are G2 motif; sequence DVLRCRVRT. Residues 192-201 are G3 motif; it reads LKIVDVGGQR. Residues 261–268 form a G4 motif region; sequence VLFLNKKD. Residues 318 to 323 form a G5 motif region; the sequence is TCAVDT.

This sequence belongs to the G-alpha family. As to quaternary structure, g proteins are composed of 3 units; alpha, beta and gamma. The alpha chain contains the guanine nucleotide binding site.

Functionally, guanine nucleotide-binding proteins (G proteins) are involved as modulators or transducers in various transmembrane signaling systems. G alpha-4 plays a role in morphogenesis of the multicellular structure. In Dictyostelium discoideum (Social amoeba), this protein is Guanine nucleotide-binding protein alpha-4 subunit (gpaD).